Here is a 418-residue protein sequence, read N- to C-terminus: Zinc finger protein 566 (418 aa).

The KRAB domain maps to 6 to 77 (VMFSDVSVDF…DRELTRGQWP (72 aa)). A C2H2-type 1; degenerate zinc finger spans residues 169 to 193 (KFCASKEYRKTFRHGSQFATHEIIH). 7 C2H2-type zinc fingers span residues 199–221 (YECKECGKSFRHPSRLTHHQKIH), 227–249 (FECKECGKTFICGSDLTRHHRIH), 255–277 (YECKECGKAFSSGSNFTRHQRIH), 283–305 (YECKECGKAFSSGSNFTQHQRIH), 311–333 (YECKECGNAFSQSSQLIKHQRIH), 339–361 (YECKECEKAFRSGSDLTRHQRIH), and 367–389 (YECKICGKAYSQSSQLISHHRIH). Residues lysine 314 and lysine 328 each participate in a glycyl lysine isopeptide (Lys-Gly) (interchain with G-Cter in SUMO2) cross-link.

It belongs to the krueppel C2H2-type zinc-finger protein family.

It is found in the nucleus. Its function is as follows. May be involved in transcriptional regulation. This chain is Zinc finger protein 566 (ZNF566), found in Pan troglodytes (Chimpanzee).